Here is a 218-residue protein sequence, read N- to C-terminus: Structural protein V19 (218 aa).

It is found in the virion. The sequence is that of Structural protein V19 from Sputnik virophage.